Consider the following 275-residue polypeptide: Dermonecrotic toxin SpeSicTox-betaIIA1 (275 aa).

The active site involves His-5. Residues Glu-25 and Asp-27 each contribute to the Mg(2+) site. The Nucleophile role is filled by His-41. 2 cysteine pairs are disulfide-bonded: Cys-45/Cys-51 and Cys-47/Cys-190. Asp-85 serves as a coordination point for Mg(2+).

It belongs to the arthropod phospholipase D family. Class II subfamily. Requires Mg(2+) as cofactor. In terms of tissue distribution, expressed by the venom gland.

It localises to the secreted. It carries out the reaction an N-(acyl)-sphingosylphosphocholine = an N-(acyl)-sphingosyl-1,3-cyclic phosphate + choline. The enzyme catalyses an N-(acyl)-sphingosylphosphoethanolamine = an N-(acyl)-sphingosyl-1,3-cyclic phosphate + ethanolamine. It catalyses the reaction a 1-acyl-sn-glycero-3-phosphocholine = a 1-acyl-sn-glycero-2,3-cyclic phosphate + choline. The catalysed reaction is a 1-acyl-sn-glycero-3-phosphoethanolamine = a 1-acyl-sn-glycero-2,3-cyclic phosphate + ethanolamine. Functionally, dermonecrotic toxins cleave the phosphodiester linkage between the phosphate and headgroup of certain phospholipids (sphingolipid and lysolipid substrates), forming an alcohol (often choline) and a cyclic phosphate. This toxin acts on sphingomyelin (SM). It may also act on ceramide phosphoethanolamine (CPE), lysophosphatidylcholine (LPC) and lysophosphatidylethanolamine (LPE), but not on lysophosphatidylserine (LPS), and lysophosphatidylglycerol (LPG). It acts by transphosphatidylation, releasing exclusively cyclic phosphate products as second products. Induces dermonecrosis, hemolysis, increased vascular permeability, edema, inflammatory response, and platelet aggregation. This is Dermonecrotic toxin SpeSicTox-betaIIA1 from Sicarius peruensis (Six-eyed sand spider).